The following is a 216-amino-acid chain: Somatotropin (216 aa).

The N-terminal stretch at 1–26 (MAAGPRTSVLLAFTLLCLPWPQEAGA) is a signal peptide. Residue His45 participates in Zn(2+) binding. Cys78 and Cys189 are disulfide-bonded. Ser131 carries the phosphoserine modification. A Zn(2+)-binding site is contributed by Glu198. Cys206 and Cys214 are disulfide-bonded.

Belongs to the somatotropin/prolactin family.

It localises to the secreted. In terms of biological role, plays an important role in growth control. Its major role in stimulating body growth is to stimulate the liver and other tissues to secrete IGF1. It stimulates both the differentiation and proliferation of myoblasts. It also stimulates amino acid uptake and protein synthesis in muscle and other tissues. The polypeptide is Somatotropin (GH1) (Camelus dromedarius (Dromedary)).